Here is a 296-residue protein sequence, read N- to C-terminus: Glycine N-acyltransferase (296 aa).

Position 16 is an N6-acetyllysine; alternate (K16). K16 carries the post-translational modification N6-succinyllysine; alternate. The residue at position 113 (K113) is an N6-acetyllysine. N6-acetyllysine; alternate occurs at positions 127 and 142. An N6-succinyllysine; alternate mark is found at K127 and K142. K159 is modified (N6-acetyllysine). K169 carries the post-translational modification N6-succinyllysine. N6-acetyllysine; alternate occurs at positions 183 and 256. 2 positions are modified to N6-succinyllysine; alternate: K183 and K256. K267 is subject to N6-succinyllysine.

It belongs to the glycine N-acyltransferase family.

It is found in the mitochondrion. The catalysed reaction is an acyl-CoA + glycine = an N-acylglycine + CoA + H(+). It catalyses the reaction benzoyl-CoA + glycine = N-benzoylglycine + CoA + H(+). Its function is as follows. Mitochondrial acyltransferase which transfers an acyl group to the N-terminus of glycine and glutamine, although much less efficiently. Can conjugate a multitude of substrates to form a variety of N-acylglycines, thereby detoxify xenobiotics, such as benzoic acid or salicylic acid, and endogenous organic acids, such as isovaleric acid. The chain is Glycine N-acyltransferase (Glyat) from Rattus norvegicus (Rat).